Consider the following 308-residue polypeptide: Elongation factor Ts (308 aa).

Residues 80 to 83 form an involved in Mg(2+) ion dislocation from EF-Tu region; that stretch reads TDFV.

The protein belongs to the EF-Ts family.

The protein resides in the cytoplasm. In terms of biological role, associates with the EF-Tu.GDP complex and induces the exchange of GDP to GTP. It remains bound to the aminoacyl-tRNA.EF-Tu.GTP complex up to the GTP hydrolysis stage on the ribosome. The polypeptide is Elongation factor Ts (Agrobacterium fabrum (strain C58 / ATCC 33970) (Agrobacterium tumefaciens (strain C58))).